The chain runs to 396 residues: Adenosine deaminase 1 (396 aa).

Positions 1-26 (MTSRSTEKSAAANPAAVSKTPSPDRI) are disordered. Zn(2+)-binding residues include His-35 and His-37. The substrate site is built by His-37, Asp-39, and Gly-197. Position 224 (His-224) interacts with Zn(2+). Catalysis depends on Glu-227, which acts as the Proton donor. Asp-316 lines the Zn(2+) pocket.

The protein belongs to the metallo-dependent hydrolases superfamily. Adenosine and AMP deaminases family. Adenosine deaminase subfamily. In terms of assembly, homotetramer. It depends on Zn(2+) as a cofactor.

The catalysed reaction is adenosine + H2O + H(+) = inosine + NH4(+). It catalyses the reaction 2'-deoxyadenosine + H2O + H(+) = 2'-deoxyinosine + NH4(+). With respect to regulation, coformycin and 2'-deoxycoformycin, whose structures mimic the transition state of the deamination reaction, are potent competitive inhibitors. Its function is as follows. Catalyzes the hydrolytic deamination of adenosine and 2-deoxyadenosine. In Streptomyces coelicolor (strain ATCC BAA-471 / A3(2) / M145), this protein is Adenosine deaminase 1.